The following is a 295-amino-acid chain: Beta-lactamase-like protein 2 homolog (295 aa).

His-79, His-81, Asp-83, His-84, His-141, Asp-160, and His-195 together coordinate Zn(2+).

It belongs to the metallo-beta-lactamase superfamily. Glyoxalase II family.

The protein is Beta-lactamase-like protein 2 homolog of Caenorhabditis elegans.